The chain runs to 194 residues: Imidazoleglycerol-phosphate dehydratase (194 aa).

The protein belongs to the imidazoleglycerol-phosphate dehydratase family.

It localises to the cytoplasm. It carries out the reaction D-erythro-1-(imidazol-4-yl)glycerol 3-phosphate = 3-(imidazol-4-yl)-2-oxopropyl phosphate + H2O. It functions in the pathway amino-acid biosynthesis; L-histidine biosynthesis; L-histidine from 5-phospho-alpha-D-ribose 1-diphosphate: step 6/9. This is Imidazoleglycerol-phosphate dehydratase from Bacillus cereus (strain ATCC 14579 / DSM 31 / CCUG 7414 / JCM 2152 / NBRC 15305 / NCIMB 9373 / NCTC 2599 / NRRL B-3711).